A 244-amino-acid chain; its full sequence is MGCRDVHAATVLSFLCGIASVAGLFAGTLLPNWRKLRLITFNRNEKNLTVYTGLWVKCARYDGGNDCLMYDAAWYSSVDQLDLRVLQFALPLSILIAMGALLLCLIGMCNTAFRSSVPNIKLAKCLVNSAGCHLVAGLLFFLAGTVSLSPSIWVIFYNIHLNRKFEPVFAFDYAVYVTVASAGGLFMTALLLFIWYCACKSLPSPFWQPLYSHPPGMHTYSQPYSARSRLSAIEIDIPVVSHTT.

Residues 1–10 (MGCRDVHAAT) lie on the Cytoplasmic side of the membrane. The chain crosses the membrane as a helical span at residues 11–31 (VLSFLCGIASVAGLFAGTLLP). The Extracellular segment spans residues 32–87 (NWRKLRLITFNRNEKNLTVYTGLWVKCARYDGGNDCLMYDAAWYSSVDQLDLRVLQ). Residues 88–108 (FALPLSILIAMGALLLCLIGM) form a helical membrane-spanning segment. The Cytoplasmic segment spans residues 109-135 (CNTAFRSSVPNIKLAKCLVNSAGCHLV). The chain crosses the membrane as a helical span at residues 136-156 (AGLLFFLAGTVSLSPSIWVIF). Residues 157–174 (YNIHLNRKFEPVFAFDYA) are Extracellular-facing. The chain crosses the membrane as a helical span at residues 175–195 (VYVTVASAGGLFMTALLLFIW). Over 196–244 (YCACKSLPSPFWQPLYSHPPGMHTYSQPYSARSRLSAIEIDIPVVSHTT) the chain is Cytoplasmic. 2 positions are modified to phosphoserine: S228 and S231.

Belongs to the claudin family. In terms of assembly, interacts with OCLN.

The protein localises to the cell junction. Its subcellular location is the tight junction. It localises to the cell membrane. Its function is as follows. Plays a major role in tight junction-specific obliteration of the intercellular space, through calcium-independent cell-adhesion activity. The chain is Claudin-12 (CLDN12) from Bos taurus (Bovine).